The chain runs to 320 residues: Reticulocalbin-2 (320 aa).

The first 25 residues, 1–25 (MRLGPRPAVLGLLLLLLLYAAVAGA), serve as a signal peptide directing secretion. EF-hand domains follow at residues 64-99 (EQQR…SFKH) and 100-135 (YAMQ…RVID). Ca(2+) is bound by residues Asp77, Asp79, Asp81, Glu88, Asp113, Asn115, Asp117, Thr119, and Glu124. At Thr140 the chain carries Phosphothreonine. EF-hand domains follow at residues 150-185 (FRQL…HPEE), 189-224 (MTEF…DPTA), 230-265 (WILV…NNQG), and 266-301 (IAQE…FLTS). Positions 167, 176, 202, 204, 206, 213, 243, 245, 247, 249, 254, 279, 281, 283, 285, and 290 each coordinate Ca(2+). The Prevents secretion from ER motif lies at 317–320 (HDEL).

Belongs to the CREC family. In terms of assembly, binds the snake venom phospholipase complex taipoxin. As to expression, ubiquitous.

The protein resides in the endoplasmic reticulum lumen. Not known. Binds calcium. This is Reticulocalbin-2 (Rcn2) from Rattus norvegicus (Rat).